The primary structure comprises 537 residues: O-phosphoserine--tRNA(Cys) ligase (537 aa).

Substrate is bound by residues 186–188 (HMT), 231–233 (SAS), 273–274 (YY), and asparagine 317.

This sequence belongs to the class-II aminoacyl-tRNA synthetase family. O-phosphoseryl-tRNA(Cys) synthetase subfamily. Homotetramer. Interacts with SepCysS.

It catalyses the reaction tRNA(Cys) + O-phospho-L-serine + ATP = O-phospho-L-seryl-tRNA(Cys) + AMP + diphosphate. Its function is as follows. Catalyzes the attachment of O-phosphoserine (Sep) to tRNA(Cys). The polypeptide is O-phosphoserine--tRNA(Cys) ligase (Methanococcus vannielii (strain ATCC 35089 / DSM 1224 / JCM 13029 / OCM 148 / SB)).